The following is a 421-amino-acid chain: Serine hydroxymethyltransferase (421 aa).

(6S)-5,6,7,8-tetrahydrofolate is bound by residues Leu-121 and Gly-125–Leu-127. Lys-229 bears the N6-(pyridoxal phosphate)lysine mark.

Belongs to the SHMT family. As to quaternary structure, homodimer. Pyridoxal 5'-phosphate serves as cofactor.

It localises to the cytoplasm. It carries out the reaction (6R)-5,10-methylene-5,6,7,8-tetrahydrofolate + glycine + H2O = (6S)-5,6,7,8-tetrahydrofolate + L-serine. It participates in one-carbon metabolism; tetrahydrofolate interconversion. The protein operates within amino-acid biosynthesis; glycine biosynthesis; glycine from L-serine: step 1/1. Functionally, catalyzes the reversible interconversion of serine and glycine with tetrahydrofolate (THF) serving as the one-carbon carrier. This reaction serves as the major source of one-carbon groups required for the biosynthesis of purines, thymidylate, methionine, and other important biomolecules. Also exhibits THF-independent aldolase activity toward beta-hydroxyamino acids, producing glycine and aldehydes, via a retro-aldol mechanism. The polypeptide is Serine hydroxymethyltransferase (Haemophilus influenzae (strain ATCC 51907 / DSM 11121 / KW20 / Rd)).